Here is a 333-residue protein sequence, read N- to C-terminus: Adenosine deaminase (333 aa).

Positions 12 and 14 each coordinate Zn(2+). Positions 14, 16, and 170 each coordinate substrate. Residue H197 coordinates Zn(2+). E200 functions as the Proton donor in the catalytic mechanism. D278 serves as a coordination point for Zn(2+). A substrate-binding site is contributed by D279.

This sequence belongs to the metallo-dependent hydrolases superfamily. Adenosine and AMP deaminases family. Adenosine deaminase subfamily. Zn(2+) serves as cofactor.

It carries out the reaction adenosine + H2O + H(+) = inosine + NH4(+). The catalysed reaction is 2'-deoxyadenosine + H2O + H(+) = 2'-deoxyinosine + NH4(+). Functionally, catalyzes the hydrolytic deamination of adenosine and 2-deoxyadenosine. The protein is Adenosine deaminase of Klebsiella pneumoniae subsp. pneumoniae (strain ATCC 700721 / MGH 78578).